Here is a 148-residue protein sequence, read N- to C-terminus: MQVLIKRNGMKRSKFHRERKEKLATMPVYEARAVAKFVRISPRKARSVANSIKGKNVSEAFTILEFSPKKAARLIKNVLKSAVANAVNNHGLNEENLYVYTCYVNDGPRMKRIWPRGRGSADIIQKRMSHITVIVRDKEAEKAAKEEK.

This sequence belongs to the universal ribosomal protein uL22 family. As to quaternary structure, part of the 50S ribosomal subunit.

Functionally, this protein binds specifically to 23S rRNA; its binding is stimulated by other ribosomal proteins, e.g. L4, L17, and L20. It is important during the early stages of 50S assembly. It makes multiple contacts with different domains of the 23S rRNA in the assembled 50S subunit and ribosome. Its function is as follows. The globular domain of the protein is located near the polypeptide exit tunnel on the outside of the subunit, while an extended beta-hairpin is found that lines the wall of the exit tunnel in the center of the 70S ribosome. The sequence is that of Large ribosomal subunit protein uL22 from Thermosipho africanus (strain TCF52B).